The following is a 686-amino-acid chain: Calponin homology and LIM domain-containing protein (686 aa).

The Calponin-homology (CH) domain occupies 15–120 (ELALDESRDW…ITLYWLGRAA (106 aa)). LIM zinc-binding domains are found at residues 139 to 200 (MNCS…ATNL) and 219 to 279 (NKCS…SCGK). Residues 305-314 (KQVMDKDGHD) show a composition bias toward basic and acidic residues. The segment at 305 to 345 (KQVMDKDGHDHHHHNHNKPTTTTTTTNSNSPLAKKKSDSCK) is disordered. The segment covering 322–333 (KPTTTTTTTNSN) has biased composition (low complexity). 4 LIM zinc-binding domains span residues 373–435 (GTCG…NNKS), 437–495 (KNCH…LNQY), 519–579 (DRCV…IQQS), and 583–658 (DHCA…ASSS).

As to quaternary structure, interacts with limF and rab21.

In terms of biological role, involved in the regulation of phagocytosis. May repress rab21. This is Calponin homology and LIM domain-containing protein (ChLim) from Dictyostelium discoideum (Social amoeba).